The primary structure comprises 213 residues: Motile sperm domain-containing protein 1 (213 aa).

In terms of domain architecture, MSP spans 16 to 143 (PVFVFPTELI…KEHLTESLFF (128 aa)). The next 2 helical transmembrane spans lie at 159-179 (SLLT…PTLG) and 191-211 (LSVN…MAIL). A Nuclear export signal motif is present at residues 205-208 (LITM).

It localises to the endoplasmic reticulum membrane. The protein resides in the golgi apparatus membrane. Plays a role in differentiation and/or proliferation of mesenchymal stem cells. Proposed to be involved in epithelial-to-mesenchymal transition (EMT). However, another study suggests that it is not required for EMT or stem cell self-renewal and acts during later stages of differentiation. In Homo sapiens (Human), this protein is Motile sperm domain-containing protein 1 (MOSPD1).